A 557-amino-acid chain; its full sequence is Trigger factor (557 aa).

The 87-residue stretch at 169–255 (GDVVVIDFQA…LKEIKTKELP (87 aa)) folds into the PPIase FKBP-type domain. Residues 438–557 (WVDSEGNPTE…KAGKKSKKDK (120 aa)) are disordered. Basic and acidic residues predominate over residues 455-466 (SEGEDRQERSES).

It belongs to the FKBP-type PPIase family. Tig subfamily.

The protein localises to the cytoplasm. The catalysed reaction is [protein]-peptidylproline (omega=180) = [protein]-peptidylproline (omega=0). Functionally, involved in protein export. Acts as a chaperone by maintaining the newly synthesized protein in an open conformation. Functions as a peptidyl-prolyl cis-trans isomerase. In Synechococcus sp. (strain JA-3-3Ab) (Cyanobacteria bacterium Yellowstone A-Prime), this protein is Trigger factor.